The sequence spans 530 residues: Phosphoenolpyruvate carboxykinase (ATP) (530 aa).

Residues Arg-60, Tyr-195, and Lys-201 each coordinate substrate. ATP-binding positions include Lys-201, His-221, and 237-245 (GLSGTGKTT). Residues Lys-201 and His-221 each contribute to the Mn(2+) site. Asp-258 contributes to the Mn(2+) binding site. ATP is bound by residues Glu-286, Arg-324, and Ser-449. Arg-324 contributes to the substrate binding site.

The protein belongs to the phosphoenolpyruvate carboxykinase (ATP) family. The cofactor is Mn(2+).

It localises to the cytoplasm. It carries out the reaction oxaloacetate + ATP = phosphoenolpyruvate + ADP + CO2. It participates in carbohydrate biosynthesis; gluconeogenesis. Functionally, involved in the gluconeogenesis. Catalyzes the conversion of oxaloacetate (OAA) to phosphoenolpyruvate (PEP) through direct phosphoryl transfer between the nucleoside triphosphate and OAA. This is Phosphoenolpyruvate carboxykinase (ATP) from Geobacter metallireducens (strain ATCC 53774 / DSM 7210 / GS-15).